Reading from the N-terminus, the 367-residue chain is Nuclear hormone receptor-like 1 (367 aa).

Positions 32–107 (GQPCVVCGDD…NGMTKSLVLN (76 aa)) form a DNA-binding region, nuclear receptor. 2 consecutive NR C4-type zinc fingers follow at residues 35 to 55 (CVVC…CEGC) and 71 to 95 (CKSI…FQKC). Residues 145-367 (EFQSRIDQVT…IANILLFKFT (223 aa)) form the NR LBD domain.

This sequence belongs to the nuclear hormone receptor family.

The protein localises to the nucleus. The sequence is that of Nuclear hormone receptor-like 1 (nhr-1) from Onchocerca volvulus.